The following is a 1134-amino-acid chain: Isoleucine--tRNA ligase (1134 aa).

The 'HIGH' region motif lies at 52–62; sequence PFANGLPHYGH. A 'KMSKS' region motif is present at residues 656-660; the sequence is KLSKR. Lys-659 is an ATP binding site.

Belongs to the class-I aminoacyl-tRNA synthetase family. IleS type 2 subfamily. In terms of assembly, monomer. Zn(2+) is required as a cofactor.

It is found in the cytoplasm. The enzyme catalyses tRNA(Ile) + L-isoleucine + ATP = L-isoleucyl-tRNA(Ile) + AMP + diphosphate. In terms of biological role, catalyzes the attachment of isoleucine to tRNA(Ile). As IleRS can inadvertently accommodate and process structurally similar amino acids such as valine, to avoid such errors it has two additional distinct tRNA(Ile)-dependent editing activities. One activity is designated as 'pretransfer' editing and involves the hydrolysis of activated Val-AMP. The other activity is designated 'posttransfer' editing and involves deacylation of mischarged Val-tRNA(Ile). This is Isoleucine--tRNA ligase from Wolbachia sp. subsp. Brugia malayi (strain TRS).